The following is a 436-amino-acid chain: ATP-dependent RNA helicase SUB2 (436 aa).

Over residues 1–16 (MSAEEDLIDYSDEELN) the composition is skewed to acidic residues. Positions 1–33 (MSAEEDLIDYSDEELNTNETAAPAADSNGKKGE) are disordered. The Q motif motif lies at 52-80 (TGFRDFLLKPELLRAIGDCGFEHPSEVQQ). One can recognise a Helicase ATP-binding domain in the interval 83–258 (IPQAMLGGDI…KKFMQNPTEH (176 aa)). ATP is bound at residue 96–103 (AKSGLGKT). A DEAD box motif is present at residues 205–208 (DECD). The 162-residue stretch at 270-431 (GLQQYFVALE…EFPKDGIDAS (162 aa)) folds into the Helicase C-terminal domain.

This sequence belongs to the DEAD box helicase family. DECD subfamily.

The protein resides in the nucleus. It catalyses the reaction ATP + H2O = ADP + phosphate + H(+). Functionally, ATP-binding RNA helicase involved in transcription elongation and required for the export of mRNA out of the nucleus. SUB2 also plays a role in pre-mRNA splicing and spliceosome assembly. May be involved in rDNA and telomeric silencing, and maintenance of genome integrity. The chain is ATP-dependent RNA helicase SUB2 (SUB2) from Pyricularia oryzae (strain 70-15 / ATCC MYA-4617 / FGSC 8958) (Rice blast fungus).